A 504-amino-acid chain; its full sequence is Fibroblast growth factor receptor-like 1 (504 aa).

The signal sequence occupies residues 1–24 (MTPSPLLLLLLPPLLLGAFPPAAA). The Extracellular portion of the chain corresponds to 25 to 378 (ARGPPKMADK…SSSATSLPWP (354 aa)). Positions 29 to 115 (PKMADKVVPR…GSLSVNYTLV (87 aa)) constitute an Ig-like C2-type 1 domain. Cys-51 and Cys-99 are disulfide-bonded. N-linked (GlcNAc...) asparagine glycosylation is present at Asn-111. The tract at residues 123–155 (GKESLGPDSSSGGQEDPASQQWARPRFTQPSKM) is disordered. A compositionally biased stretch (polar residues) spans 129–144 (PDSSSGGQEDPASQQW). Ig-like C2-type domains are found at residues 147 to 237 (PRFT…YKVD) and 246 to 354 (PVLT…AFLT). Cys-172 and Cys-221 are disulfide-bonded. N-linked (GlcNAc...) asparagine glycosylation is found at Asn-231, Asn-255, and Asn-293. Cys-268 and Cys-338 are oxidised to a cystine. A helical membrane pass occupies residues 379-399 (VVIGIPAGAVFILGTLLLWLC). At 400–504 (QAQKKPCTPA…KVHQHIHYQC (105 aa)) the chain is on the cytoplasmic side. The span at 407-418 (TPAPAPPLPGHR) shows a compositional bias: pro residues. Positions 407 to 435 (TPAPAPPLPGHRPPGTARDRSGDKDLPSL) are disordered. Residues 423–432 (ARDRSGDKDL) show a composition bias toward basic and acidic residues.

In terms of assembly, interacts with FGF2 with a low affinity. Expressed preferentially in cartilaginous tissues and pancreas. Highly expressed in the liver, kidney, heart, brain and skeletal muscle. Weakly expressed in the lung, small intestine and spleen.

It is found in the membrane. Functionally, has a negative effect on cell proliferation. The polypeptide is Fibroblast growth factor receptor-like 1 (FGFRL1) (Homo sapiens (Human)).